We begin with the raw amino-acid sequence, 123 residues long: Small ribosomal subunit protein uS12 (123 aa).

The interval 1-25 is disordered; that stretch reads MPTINQLVRKPRKSRSALNKAPALQ. D90 is modified (3-methylthioaspartic acid).

Belongs to the universal ribosomal protein uS12 family. Part of the 30S ribosomal subunit. Contacts proteins S8 and S17. May interact with IF1 in the 30S initiation complex.

With S4 and S5 plays an important role in translational accuracy. In terms of biological role, interacts with and stabilizes bases of the 16S rRNA that are involved in tRNA selection in the A site and with the mRNA backbone. Located at the interface of the 30S and 50S subunits, it traverses the body of the 30S subunit contacting proteins on the other side and probably holding the rRNA structure together. The combined cluster of proteins S8, S12 and S17 appears to hold together the shoulder and platform of the 30S subunit. This Ehrlichia canis (strain Jake) protein is Small ribosomal subunit protein uS12.